Reading from the N-terminus, the 521-residue chain is Glycogen synthase (521 aa).

An ADP-alpha-D-glucose-binding site is contributed by lysine 18.

Belongs to the glycosyltransferase 1 family. Bacterial/plant glycogen synthase subfamily.

It carries out the reaction [(1-&gt;4)-alpha-D-glucosyl](n) + ADP-alpha-D-glucose = [(1-&gt;4)-alpha-D-glucosyl](n+1) + ADP + H(+). It functions in the pathway glycan biosynthesis; glycogen biosynthesis. In terms of biological role, synthesizes alpha-1,4-glucan chains using ADP-glucose. In Bordetella petrii (strain ATCC BAA-461 / DSM 12804 / CCUG 43448), this protein is Glycogen synthase.